Consider the following 364-residue polypeptide: Aminomethyltransferase (364 aa).

The protein belongs to the GcvT family. In terms of assembly, the glycine cleavage system is composed of four proteins: P, T, L and H.

It carries out the reaction N(6)-[(R)-S(8)-aminomethyldihydrolipoyl]-L-lysyl-[protein] + (6S)-5,6,7,8-tetrahydrofolate = N(6)-[(R)-dihydrolipoyl]-L-lysyl-[protein] + (6R)-5,10-methylene-5,6,7,8-tetrahydrofolate + NH4(+). The glycine cleavage system catalyzes the degradation of glycine. This Shewanella sediminis (strain HAW-EB3) protein is Aminomethyltransferase.